A 249-amino-acid chain; its full sequence is Glutathione S-transferase S1 (249 aa).

Positions 1–38 are enriched in low complexity; it reads MADEAQAPPAEGAPPAEGEAPPPAEGAEGAVEGGEAAP. Positions 1 to 42 are disordered; it reads MADEAQAPPAEGAPPAEGEAPPPAEGAEGAVEGGEAAPPAEP. The GST N-terminal domain maps to 48 to 125; sequence HSYTLFYFNV…FLAKTVGLCG (78 aa). Glutathione contacts are provided by residues Y54, W85, K89, 96–97, and 109–110; these read QM and QS. In terms of domain architecture, GST C-terminal spans 127 to 249; sequence TPWEDLQIDI…WIEKRPVTEV (123 aa).

Belongs to the GST superfamily. Sigma family. As to quaternary structure, homodimer.

The enzyme catalyses RX + glutathione = an S-substituted glutathione + a halide anion + H(+). In terms of biological role, conjugation of reduced glutathione to a wide number of exogenous and endogenous hydrophobic electrophiles. May be involved in the detoxification of metabolites produced during cellular division and morphogenesis. This Drosophila melanogaster (Fruit fly) protein is Glutathione S-transferase S1.